We begin with the raw amino-acid sequence, 130 residues long: 3-aminoacrylate deaminase RutC (130 aa).

The protein belongs to the RutC family.

It carries out the reaction (Z)-3-aminoacrylate + H2O + H(+) = 3-oxopropanoate + NH4(+). Its function is as follows. Involved in pyrimidine catabolism. Catalyzes the deamination of 3-aminoacrylate to malonic semialdehyde, a reaction that can also occur spontaneously. RutC may facilitate the reaction and modulate the metabolic fitness, rather than catalyzing essential functions. This chain is 3-aminoacrylate deaminase RutC, found in Klebsiella pneumoniae (strain 342).